Consider the following 307-residue polypeptide: tRNA dimethylallyltransferase (307 aa).

ATP is bound at residue glycine 6–threonine 13. Threonine 8–threonine 13 is a substrate binding site. The segment at aspartate 31 to methionine 34 is interaction with substrate tRNA.

It belongs to the IPP transferase family. As to quaternary structure, monomer. The cofactor is Mg(2+).

It carries out the reaction adenosine(37) in tRNA + dimethylallyl diphosphate = N(6)-dimethylallyladenosine(37) in tRNA + diphosphate. In terms of biological role, catalyzes the transfer of a dimethylallyl group onto the adenine at position 37 in tRNAs that read codons beginning with uridine, leading to the formation of N6-(dimethylallyl)adenosine (i(6)A). In Sulfurihydrogenibium sp. (strain YO3AOP1), this protein is tRNA dimethylallyltransferase.